The primary structure comprises 188 residues: GMP synthase [glutamine-hydrolyzing] subunit A (188 aa).

Residues 2–188 (KVGLVYYGGQ…FKNFLGVCRK (187 aa)) enclose the Glutamine amidotransferase type-1 domain. C79 (nucleophile) is an active-site residue. Residues H166 and E168 contribute to the active site.

As to quaternary structure, heterodimer composed of a glutamine amidotransferase subunit (A) and a GMP-binding subunit (B).

The catalysed reaction is XMP + L-glutamine + ATP + H2O = GMP + L-glutamate + AMP + diphosphate + 2 H(+). The protein operates within purine metabolism; GMP biosynthesis; GMP from XMP (L-Gln route): step 1/1. Its function is as follows. Catalyzes the synthesis of GMP from XMP. This Saccharolobus solfataricus (strain ATCC 35092 / DSM 1617 / JCM 11322 / P2) (Sulfolobus solfataricus) protein is GMP synthase [glutamine-hydrolyzing] subunit A.